The sequence spans 1113 residues: Centrosomal protein of 131 kDa (1113 aa).

Disordered stretches follow at residues 78-97 (RRSNSTTQVNQQANTSLSSE) and 232-267 (KSQKNFSSASSSSNNNAPRSPRSPGQPRRREVTEEE). A compositionally biased stretch (polar residues) spans 79 to 97 (RSNSTTQVNQQANTSLSSE). The segment covering 238-257 (SSASSSSNNNAPRSPRSPGQ) has biased composition (low complexity). Residues 259 to 371 (RRREVTEEEA…QQIAEQETEA (113 aa)) adopt a coiled-coil conformation. The region spanning 276 to 296 (NHAAIIIQRWYRRHVNSKRAN) is the IQ domain. Disordered stretches follow at residues 306–331 (SKKKEREQRAEEAKTTESLKKKEDDR), 368–401 (ETEALRHPGKVGRKKLTKSSPTSPTDIKAKNTDS), and 438–458 (SVSMEDQRQGASSSRAQSKTT). Positions 307-331 (KKKEREQRAEEAKTTESLKKKEDDR) are enriched in basic and acidic residues. Over residues 374-384 (HPGKVGRKKLT) the composition is skewed to basic residues. The span at 446–458 (QGASSSRAQSKTT) shows a compositional bias: low complexity. Residues 580–1111 (SMMRLRLELD…LLEQQRKQLL (532 aa)) are a coiled coil.

Belongs to the CEP131 family.

Its subcellular location is the chromosome. It localises to the centromere. The protein localises to the cytoplasm. It is found in the cytoskeleton. The protein resides in the microtubule organizing center. Its subcellular location is the centrosome. It localises to the centriolar satellite. The protein localises to the cilium basal body. It is found in the cytoplasmic vesicle. The protein resides in the secretory vesicle. Its subcellular location is the acrosome. Functionally, cilium-specific protein required for the regulation of cilium/flagellum formation. Involved in centriole duplication. May play a role in melanosome trafficking. This chain is Centrosomal protein of 131 kDa (cep131), found in Danio rerio (Zebrafish).